A 146-amino-acid polypeptide reads, in one-letter code: Transcription antitermination protein NusB (146 aa).

Belongs to the NusB family.

Involved in transcription antitermination. Required for transcription of ribosomal RNA (rRNA) genes. Binds specifically to the boxA antiterminator sequence of the ribosomal RNA (rrn) operons. The polypeptide is Transcription antitermination protein NusB (Herpetosiphon aurantiacus (strain ATCC 23779 / DSM 785 / 114-95)).